The chain runs to 443 residues: UDP-N-acetylmuramate--L-alanine ligase (443 aa).

111 to 117 (GAHGKTS) lines the ATP pocket.

It belongs to the MurCDEF family.

It is found in the cytoplasm. The catalysed reaction is UDP-N-acetyl-alpha-D-muramate + L-alanine + ATP = UDP-N-acetyl-alpha-D-muramoyl-L-alanine + ADP + phosphate + H(+). Its pathway is cell wall biogenesis; peptidoglycan biosynthesis. In terms of biological role, cell wall formation. The chain is UDP-N-acetylmuramate--L-alanine ligase from Levilactobacillus brevis (strain ATCC 367 / BCRC 12310 / CIP 105137 / JCM 1170 / LMG 11437 / NCIMB 947 / NCTC 947) (Lactobacillus brevis).